The sequence spans 83 residues: MSNKGQLLQDPFLNALRREHVPVSIYLVNGIKLQGQIESFDQYVVLLRNTVTQMVYKHAISTIVPGRAVNFSTAEPAADGDNQ.

The region spanning 10 to 69 (DPFLNALRREHVPVSIYLVNGIKLQGQIESFDQYVVLLRNTVTQMVYKHAISTIVPGRAV) is the Sm domain.

Belongs to the Hfq family. In terms of assembly, homohexamer.

RNA chaperone that binds small regulatory RNA (sRNAs) and mRNAs to facilitate mRNA translational regulation in response to envelope stress, environmental stress and changes in metabolite concentrations. Also binds with high specificity to tRNAs. The sequence is that of RNA-binding protein Hfq from Acidovorax ebreus (strain TPSY) (Diaphorobacter sp. (strain TPSY)).